The chain runs to 267 residues: Placental prolactin-related protein 2 (267 aa).

N-linked (GlcNAc...) asparagine glycosylation is found at N99 and N121. Disulfide bonds link C126–C244 and C261–C267.

It belongs to the somatotropin/prolactin family.

The protein resides in the secreted. In terms of biological role, placental prolactin-related proteins may play a specific role during gestation. The protein is Placental prolactin-related protein 2 (PRP2) of Bos taurus (Bovine).